A 542-amino-acid chain; its full sequence is MLO-like protein 7 (542 aa).

At 1–38 the chain is on the extracellular side; the sequence is MITRSRCRRSLLWFLVFHGGATATGAPSGGKELSQTPT. A helical membrane pass occupies residues 39-59; it reads WAVAVVCTFLILISHLLEKGL. Over 60-82 the chain is Cytoplasmic; the sequence is QRLANWLWKKHKNSLLEALEKIK. Residues 83-103 traverse the membrane as a helical segment; the sequence is AELMILGFISLLLTFGEPYIL. Residues 104–165 lie on the Extracellular side of the membrane; that stretch reads KICVPRKAAL…ITLKGLHQLH (62 aa). The chain crosses the membrane as a helical span at residues 166 to 186; it reads ILLFFLAIFHIVYSLITMMLS. Residues 187-288 are Cytoplasmic-facing; sequence RLKIRGWKKW…IKRSLEDDFK (102 aa). The helical transmembrane segment at 289–309 threads the bilayer; that stretch reads LVVGISPVLWASFVIFLLFNV. The Extracellular portion of the chain corresponds to 310-315; it reads NGWRTL. The helical transmembrane segment at 316 to 336 threads the bilayer; that stretch reads FWASIPPLLIILAVGTKLQAI. At 337 to 374 the chain is on the cytoplasmic side; sequence MATMALEIVETHAVVQGMPLVQGSDRYFWFDCPQLLLH. The helical transmembrane segment at 375–395 threads the bilayer; it reads LIHFALFQNAFQITHFFWIWY. Residues 396–414 lie on the Extracellular side of the membrane; sequence SFGLKSCFHKDFNLVVSKL. Residues 415 to 435 traverse the membrane as a helical segment; that stretch reads FLCLGALILCSYITLPLYALV. At 436–542 the chain is on the cytoplasmic side; it reads TQMGSHMKKA…QQQEMQFHNS (107 aa). The segment at 449–470 is calmodulin-binding; the sequence is EQMAKALKKWHKDIKLKKGKAR.

The protein belongs to the MLO family. In terms of tissue distribution, restricted to pollen, synergids, pistils and immature anthers. Also detected in seedlings, leaves, stems and inflorescens.

The protein localises to the cell membrane. It localises to the endomembrane system. In terms of biological role, may be involved in modulation of pathogen defense and leaf cell death. Activity seems to be regulated by Ca(2+)-dependent calmodulin binding and seems not to require heterotrimeric G proteins. Controls pollen tube reception in the female gametophyte synergids. The protein is MLO-like protein 7 (MLO7) of Arabidopsis thaliana (Mouse-ear cress).